The primary structure comprises 37 residues: Large ribosomal subunit protein bL36 (37 aa).

The protein belongs to the bacterial ribosomal protein bL36 family.

In Metamycoplasma arthritidis (strain 158L3-1) (Mycoplasma arthritidis), this protein is Large ribosomal subunit protein bL36.